Here is a 2863-residue protein sequence, read N- to C-terminus: Lipopolysaccharide-responsive and beige-like anchor protein (2863 aa).

Disordered regions lie at residues 1-35 (MASE…ALSL), 969-1005 (VGSQ…ESAS), and 1018-1039 (EMKA…ETLT). N-acetylalanine is present on Ala-2. Phosphoserine occurs at positions 10, 979, and 1003. The span at 985–1005 (FTTNGNENSSIEKTSSLESAS) shows a compositional bias: polar residues. A coiled-coil region spans residues 1006–1053 (NIELQTTNTSYEEMKAEQENQELPDEGTLEETLTNETRNADDLEVSSD). Residues 1024-1034 (ENQELPDEGTL) are compositionally biased toward acidic residues. 3 positions are modified to phosphoserine: Ser-1100, Ser-1135, and Ser-1139. A compositionally biased stretch (basic and acidic residues) spans 1161–1176 (PVTEKQTDTETQDSKD). The segment at 1161–1193 (PVTEKQTDTETQDSKDSGIQTMTASGSSAMSPE) is disordered. A compositionally biased stretch (polar residues) spans 1177–1193 (SGIQTMTASGSSAMSPE). 3 positions are modified to phosphoserine: Ser-1233, Ser-1247, and Ser-1261. A WD 1 repeat occupies 1301-1343 (STVFRIPEFNWSQMHQRLLTDLLFSIETDIQMWRSHSTKTVMD). Phosphoserine is present on residues Ser-1488 and Ser-1498. The helical transmembrane segment at 1531–1548 (FLALAVVYFISVLMVSKY) threads the bilayer. Residues 1586–1599 (LTTASVEESESTSS) show a composition bias toward low complexity. 2 disordered regions span residues 1586 to 1668 (LTTA…KATP) and 1759 to 1789 (QASD…VSQD). Ser-1605 carries the post-translational modification Phosphoserine. Basic and acidic residues predominate over residues 1650 to 1664 (KSPETKNDRGNDLDT). 3 positions are modified to phosphoserine: Ser-1767, Ser-1770, and Ser-2064. The segment covering 1769 to 1789 (GSRSSNAKLPSVPTVDSVSQD) has biased composition (polar residues). A BEACH-type PH domain is found at 2073–2181 (NLAGPVSLST…TVKKVVNYLP (109 aa)). One can recognise a BEACH domain in the interval 2200 to 2489 (ASPRQLFKAS…QLLIEPHPPR (290 aa)). Ser-2496 is subject to Phosphoserine. WD repeat units lie at residues 2591 to 2633 (DQSI…LIQV), 2636 to 2679 (GHWD…SGIG), 2695 to 2735 (GHDY…RTLE), 2777 to 2816 (ETDD…QLFA), and 2819 to 2858 (GCDA…WHHE).

As to quaternary structure, interacts with TOM1 and TOLLIP. In terms of tissue distribution, ubiquitous.

It localises to the cell membrane. The protein resides in the endoplasmic reticulum membrane. The protein localises to the golgi apparatus. It is found in the trans-Golgi network membrane. Its subcellular location is the lysosome membrane. In terms of biological role, involved in coupling signal transduction and vesicle trafficking to enable polarized secretion and/or membrane deposition of immune effector molecules. Involved in phagophore growth during mitophagy by regulating ATG9A trafficking to mitochondria. This is Lipopolysaccharide-responsive and beige-like anchor protein from Homo sapiens (Human).